The primary structure comprises 473 residues: Photosystem II CP43 reaction center protein (473 aa).

Residues 1 to 14 (MKTLYSLRRFYPVE) constitute a propeptide that is removed on maturation. Residue threonine 15 is modified to N-acetylthreonine. Position 15 is a phosphothreonine (threonine 15). 5 helical membrane-spanning segments follow: residues 69–93 (LFEVAHFVPEKPMYEQGLILLPHLA), 134–155 (LIGPETLEESFPFFGYVWKDKN), 178–200 (KALYFGGVYDTWAPGGGDVRKIT), 255–275 (KPFAWARRAFIWSGEAYLSYS), and 291–312 (WFNNTAYPSEFYGPTGPEASQA). Glutamate 367 is a [CaMn4O5] cluster binding site. A helical transmembrane segment spans residues 447–471 (RARAAAAGFEKGIDRDTEPVLSMTP).

This sequence belongs to the PsbB/PsbC family. PsbC subfamily. In terms of assembly, PSII is composed of 1 copy each of membrane proteins PsbA, PsbB, PsbC, PsbD, PsbE, PsbF, PsbH, PsbI, PsbJ, PsbK, PsbL, PsbM, PsbT, PsbX, PsbY, PsbZ, Psb30/Ycf12, at least 3 peripheral proteins of the oxygen-evolving complex and a large number of cofactors. It forms dimeric complexes. It depends on Binds multiple chlorophylls and provides some of the ligands for the Ca-4Mn-5O cluster of the oxygen-evolving complex. It may also provide a ligand for a Cl- that is required for oxygen evolution. PSII binds additional chlorophylls, carotenoids and specific lipids. as a cofactor.

It localises to the plastid. Its subcellular location is the chloroplast thylakoid membrane. Its function is as follows. One of the components of the core complex of photosystem II (PSII). It binds chlorophyll and helps catalyze the primary light-induced photochemical processes of PSII. PSII is a light-driven water:plastoquinone oxidoreductase, using light energy to abstract electrons from H(2)O, generating O(2) and a proton gradient subsequently used for ATP formation. The sequence is that of Photosystem II CP43 reaction center protein from Angiopteris evecta (Mule's foot fern).